A 104-amino-acid chain; its full sequence is Translation initiation factor 1A (104 aa).

Positions 1-14 (MRGQQTPPQQPTRV) are enriched in low complexity. The disordered stretch occupies residues 1-20 (MRGQQTPPQQPTRVRTPREN). Positions 12–87 (TRVRTPRENE…EKCDVIWRYT (76 aa)) constitute an S1-like domain.

Belongs to the eIF-1A family.

Its function is as follows. Seems to be required for maximal rate of protein biosynthesis. Enhances ribosome dissociation into subunits and stabilizes the binding of the initiator Met-tRNA(I) to 40 S ribosomal subunits. This is Translation initiation factor 1A from Methanococcus maripaludis (strain DSM 14266 / JCM 13030 / NBRC 101832 / S2 / LL).